Consider the following 920-residue polypeptide: 2-oxoglutarate dehydrogenase E1 component (920 aa).

This sequence belongs to the alpha-ketoglutarate dehydrogenase family. As to quaternary structure, homodimer. Part of the 2-oxoglutarate dehydrogenase (OGDH) complex composed of E1 (2-oxoglutarate dehydrogenase), E2 (dihydrolipoamide succinyltransferase) and E3 (dihydrolipoamide dehydrogenase); the complex contains multiple copies of the three enzymatic components (E1, E2 and E3). Thiamine diphosphate serves as cofactor.

It carries out the reaction N(6)-[(R)-lipoyl]-L-lysyl-[protein] + 2-oxoglutarate + H(+) = N(6)-[(R)-S(8)-succinyldihydrolipoyl]-L-lysyl-[protein] + CO2. Functionally, E1 component of the 2-oxoglutarate dehydrogenase (OGDH) complex which catalyzes the decarboxylation of 2-oxoglutarate, the first step in the conversion of 2-oxoglutarate to succinyl-CoA and CO(2). This chain is 2-oxoglutarate dehydrogenase E1 component, found in Leptospira interrogans serogroup Icterohaemorrhagiae serovar copenhageni (strain Fiocruz L1-130).